Here is a 367-residue protein sequence, read N- to C-terminus: Pre-small/secreted glycoprotein (367 aa).

An N-terminal signal peptide occupies residues 1–33 (MGSGYQLLQLPRERFRKTSFLVWVIILFQRAIS). N-linked (GlcNAc...) asparagine; by host glycosylation is present at Asn41. Disulfide bonds link Cys109-Cys136 and Cys122-Cys148. N-linked (GlcNAc...) asparagine; by host glycans are attached at residues Asn205, Asn229, Asn239, Asn258, and Asn269.

Belongs to the filoviruses glycoprotein family. As to quaternary structure, homodimer; disulfide-linked. The homodimers are linked by two disulfide bonds in a parallel orientation. In terms of assembly, monomer. Post-translationally, this precursor is processed into mature sGP and delta-peptide by host furin or furin-like proteases. The cleavage site corresponds to the furin optimal cleavage sequence [KR]-X-[KR]-R. N-glycosylated. In terms of processing, O-glycosylated.

It localises to the secreted. Its function is as follows. Seems to possess an anti-inflammatory activity as it can reverse the barrier-decreasing effects of TNF alpha. Might therefore contribute to the lack of inflammatory reaction seen during infection in spite the of extensive necrosis and massive virus production. Does not seem to be involved in activation of primary macrophages. Does not seem to interact specifically with neutrophils. Viroporin that permeabilizes mammalian cell plasma membranes. It acts by altering permeation of ionic compounds and small molecules. This activity may lead to viral enterotoxic activity. The chain is Pre-small/secreted glycoprotein (GP) from Epomops franqueti (Franquet's epauletted fruit bat).